The sequence spans 312 residues: G-protein coupled receptor BILF1 (312 aa).

Topologically, residues 1–40 (MLSTMAPGSTVGTLVANMTSVNATEDACTKSYSAFLSGMT) are extracellular. Disulfide bonds link C28/C258 and C97/C174. A helical membrane pass occupies residues 41-61 (SLLLVLLILLTLAGILFIIFV). The Cytoplasmic portion of the chain corresponds to 62–67 (RKLVHR). A helical membrane pass occupies residues 68–88 (MDVWLIALLIELLLWVLGKMI). At 89–95 (QEFSSTG) the chain is on the extracellular side. Residues 96–116 (LCLLTQNMMFLGLMCSVWTHL) traverse the membrane as a helical segment. Topologically, residues 117–138 (GMALEKTLALFSRTPKRTSHRN) are cytoplasmic. A helical transmembrane segment spans residues 139 to 159 (VCLYLMGVFCLVLLLIIILLI). At 160–192 (TMGPDANLNRGPNMCREGPTKGMHTAVQGLKAG) the chain is on the extracellular side. Residues 193-213 (CYLLAAVLIVLLTVIIIWKLL) form a helical membrane-spanning segment. Over 214–228 (RTKFGRKPRLICNVT) the chain is Cytoplasmic. A helical membrane pass occupies residues 229-249 (FTGLICAFSWFMLSLPLLFLG). The Extracellular portion of the chain corresponds to 250 to 269 (EAGSLGFDCTESLVARYYPG). Residues 270–290 (PAACLALLLIILYAWSFSHFM) form a helical membrane-spanning segment. Residues 291-312 (DSLKNQVTVTARYFRRVPSQST) lie on the Cytoplasmic side of the membrane.

The protein belongs to the Epstein-Barr virus BILF1 protein family. In terms of assembly, interacts with host CXCR4 to form higher-order heterooligomers. Interacts with host Gi heterotrimer.

The protein resides in the host cell membrane. The protein localises to the host mitochondrion outer membrane. Constitutively active, ligand-independent G protein-coupled receptor that has immunoevasive and oncogenic activities. Couples with the host inhibitory G protein (Gi) in order to disrupt the host chemokine signaling. As a consequence of its constitutive activity, mediates host CXCR4 inhibition. Enhances degradation of host major histocompatibility complex class I antigens via lysosomes, thereby modulating the antigen presentation to cytotoxic T cells. Targets selectively HLA-A, HLA-Band HLA-E molecules. Targets also newly synthesized MHC-I/peptide complexes en route to the host cell surface. Inhibits the host EIF2AK2/PKR phosphorylation. Displays tranforming activity. Utilizes its C-terminal tail to trigger host MAVS UFMylation via PARK2, resulting in selective MAVS removal from mitochondrial membranes and routing to lysosomes to prevent viral activation of the NLRP3 inflammasome. The sequence is that of G-protein coupled receptor BILF1 from Homo sapiens (Human).